Reading from the N-terminus, the 421-residue chain is Inner membrane protein YihN (421 aa).

At 1 to 44 the chain is on the periplasmic side; it reads MLTKKKWALFSLLTLCGGTIYKLPSLKDAFYIPMQEYFHLTNGQ. The chain crosses the membrane as a helical span at residues 45–65; sequence IGNAMSVNSFVTTVGFFLSIY. Residues 66–73 are Cytoplasmic-facing; that stretch reads FADKLPRR. A helical transmembrane segment spans residues 74 to 91; the sequence is YTMSFSLIATGLLGVYLT. The Periplasmic segment spans residues 92–95; that stretch reads TMPG. The helical transmembrane segment at 96–118 threads the bilayer; sequence YWGILFVWALFGVTCDMMNWPVL. Residues 119-146 are Cytoplasmic-facing; that stretch reads LKSVSRLGNSEQQGRLFGFFETGRGIVD. The helical transmembrane segment at 147–167 threads the bilayer; it reads TVVAFSALAVFTWFGSGLLGF. Position 168 (lysine 168) is a topological domain, periplasmic. The helical transmembrane segment at 169 to 189 threads the bilayer; sequence AGIWFYSLIVIAVGIIIFFVL. At 190 to 220 the chain is on the cytoplasmic side; it reads NDKEEAPSVEVKKEDGASKNTSMTSVLKDKT. 2 helical membrane passes run 221 to 241 and 242 to 262; these read IWLI…LTFF and IPFL…YGII. The Cytoplasmic segment spans residues 263-288; sequence NQYCLKMIGGPIGGMISDKILKSPSK. Helical transmembrane passes span 289–309 and 310–330; these read YLCY…MLPH and ESMP…IVFT. The Cytoplasmic portion of the chain corresponds to 331–354; sequence QRAVFFAPIGEAKIAENKTGAAMA. Residues 355–375 traverse the membrane as a helical segment; it reads LGSFIGYAPAMFCFSLYGYIL. The Periplasmic portion of the chain corresponds to 376–385; that stretch reads DLNPGIIGYK. A helical membrane pass occupies residues 386–406; that stretch reads IVFGIMACFAFSGAVVSVMLV. Residues 407-421 are Cytoplasmic-facing; it reads KRISQRKKEMLAAEA.

The protein belongs to the major facilitator superfamily.

Its subcellular location is the cell inner membrane. This chain is Inner membrane protein YihN (yihN), found in Escherichia coli (strain K12).